Consider the following 580-residue polypeptide: Arginine--tRNA ligase (580 aa).

Residues 131–141 carry the 'HIGH' region motif; that stretch reads ANPTGPMHVGH.

This sequence belongs to the class-I aminoacyl-tRNA synthetase family. In terms of assembly, monomer.

The protein resides in the cytoplasm. It carries out the reaction tRNA(Arg) + L-arginine + ATP = L-arginyl-tRNA(Arg) + AMP + diphosphate. The protein is Arginine--tRNA ligase of Cereibacter sphaeroides (strain ATCC 17029 / ATH 2.4.9) (Rhodobacter sphaeroides).